The chain runs to 182 residues: MSKKKEKKFQESKISTRSYRSTTMLRHQIRRITTANRLLDELKTSKDIEKFLNNSTWSIKELLQQPLTNTTTKEVSSDVVTKMLKLSGLSDSQDIQNIRKSLNLQMMFINHLYDKSGNNAEKKVNDNNCMFRLLASDHIPQRPLDLDTLMDEINKLEPSEEKGEIGFGIKDLQRDSFVINKK.

It belongs to the GatF family. Subunit of the heterotrimeric GatFAB amidotransferase (AdT) complex, composed of A, B and F subunits.

It localises to the mitochondrion inner membrane. It catalyses the reaction L-glutamyl-tRNA(Gln) + L-glutamine + ATP + H2O = L-glutaminyl-tRNA(Gln) + L-glutamate + ADP + phosphate + H(+). In terms of biological role, allows the formation of correctly charged Gln-tRNA(Gln) through the transamidation of misacylated Glu-tRNA(Gln) in the mitochondria. The reaction takes place in the presence of glutamine and ATP through an activated gamma-phospho-Glu-tRNA(Gln). Required for proper protein synthesis within the mitochondrion. The protein is Glutamyl-tRNA(Gln) amidotransferase subunit F, mitochondrial of Candida tropicalis (strain ATCC MYA-3404 / T1) (Yeast).